We begin with the raw amino-acid sequence, 1405 residues long: ATP-dependent helicase/nuclease subunit A (1405 aa).

A UvrD-like helicase ATP-binding domain is found at 7–482; the sequence is REWTPDQLAA…ILLKANFRSR (476 aa). 28–35 is a binding site for ATP; that stretch reads AAAGAGKT. In terms of domain architecture, UvrD-like helicase C-terminal spans 551-914; that stretch reads PEAVGAGKGG…RVMSIHRAKG (364 aa). Disordered stretches follow at residues 778-797 and 1132-1165; these read QEPW…KAVP and AGKT…QDET. Over residues 787-796 the composition is skewed to low complexity; sequence GPGAAAGKAV.

It belongs to the helicase family. AddA subfamily. As to quaternary structure, heterodimer of AddA and AddB/RexB. It depends on Mg(2+) as a cofactor.

It carries out the reaction Couples ATP hydrolysis with the unwinding of duplex DNA by translocating in the 3'-5' direction.. It catalyses the reaction ATP + H2O = ADP + phosphate + H(+). Functionally, the heterodimer acts as both an ATP-dependent DNA helicase and an ATP-dependent, dual-direction single-stranded exonuclease. Recognizes the chi site generating a DNA molecule suitable for the initiation of homologous recombination. The AddA nuclease domain is required for chi fragment generation; this subunit has the helicase and 3' -&gt; 5' nuclease activities. This Moorella thermoacetica (strain ATCC 39073 / JCM 9320) protein is ATP-dependent helicase/nuclease subunit A.